The chain runs to 416 residues: MSGRRELCTPLRTIMTPGPVEVDPRVLRVMSTPVVGQFDPAFTGIMNETMEMLRELFQTKNRWAYPIDGTSRAGIEAVLASVIEPEDDVLIPIYGRFGYLLTEIAERYGANVHMLECEWGTVFDPEDIIREIKKVKPKIVAMVHGETSTGRIHPLKAIGEACRTEDALFIVDAVATIGGCEVKVDEWKIDAAIGGTQKCLSVPSGMAPITYNERVADVIAARKKVERGIATQADRAALSGNRPITSNYFDLSQLEDYWSERRLNHHTEATTMLYALREGVRLVLEEGLETRFERHRHHEAALAAGIKAMGLRLFGDDSCKMPVVTCVEIPGGIDGESVRDMLLAQFGIEIASSFGPLAGKIWRIGTMGYSCRKENVLFVLAGLEAVLLRHNAGIEAGKALQAALDVYENAGRQAAV.

The residue at position 198 (Lys-198) is an N6-(pyridoxal phosphate)lysine.

This sequence belongs to the class-V pyridoxal-phosphate-dependent aminotransferase family. In terms of assembly, homodimer. Pyridoxal 5'-phosphate serves as cofactor.

The catalysed reaction is (S)-2-ureidoglycine + glyoxylate = N-carbamoyl-2-oxoglycine + glycine. The protein operates within nitrogen metabolism; (S)-allantoin degradation. Its function is as follows. Catalyzes the transamination between an unstable intermediate ((S)-ureidoglycine) and the end product of purine catabolism (glyoxylate) to yield oxalurate and glycine. Glyoxylate is the preferred substrate, but other amino-group acceptors can be used. This chain is (S)-ureidoglycine--glyoxylate transaminase, found in Bacillus subtilis (strain 168).